A 1172-amino-acid chain; its full sequence is MRPFFLLCFALPGLLHAQQACSRGACYPPVGDLLVGRTRFLRASSTCGLTKPETYCTQYGEWQMKCCKCDSRQPHNYYSHRVENVASSSGPMRWWQSQNDVNPVSLQLDLDRRFQLQEVMMEFQGPMPAGMLIERSSDFGKTWRVYQYLAADCTSTFPRVRQGRPQSWQDVRCQSLPQRPNARLNGGKVQLNLMDLVSGIPATQSQKIQEVGEITNLRVNFTRLAPVPQRGYHPPSAYYAVSQLRLQGSCFCHGHADRCAPKPGASAGPSTAVQVHDVCVCQHNTAGPNCERCAPFYNNRPWRPAEGQDAHECQRCDCNGHSETCHFDPAVFAASQGAYGGVCDNCRDHTEGKNCERCQLHYFRNRRPGASIQETCISCECDPDGAVPGAPCDPVTGQCVCKEHVQGERCDLCKPGFTGLTYANPQGCHRCDCNILGSRRDMPCDEESGRCLCLPNVVGPKCDQCAPYHWKLASGQGCEPCACDPHNSLSPQCNQFTGQCPCREGFGGLMCSAAAIRQCPDRTYGDVATGCRACDCDFRGTEGPGCDKASGRCLCRPGLTGPRCDQCQRGYCNRYPVCVACHPCFQTYDADLREQALRFGRLRNATASLWSGPGLEDRGLASRILDAKSKIEQIRAVLSSPAVTEQEVAQVASAILSLRRTLQGLQLDLPLEEETLSLPRDLESLDRSFNGLLTMYQRKREQFEKISSADPSGAFRMLSTAYEQSAQAAQQVSDSSRLLDQLRDSRREAERLVRQAGGGGGTGSPKLVALRLEMSSLPDLTPTFNKLCGNSRQMACTPISCPGELCPQDNGTACGSRCRGVLPRAGGAFLMAGQVAEQLRGFNAQLQRTRQMIRAAEESASQIQSSAQRLETQVSASRSQMEEDVRRTRLLIQQVRDFLTDPDTDAATIQEVSEAVLALWLPTDSATVLQKMNEIQAIAARLPNVDLVLSQTKQDIARARRLQAEAEEARSRAHAVEGQVEDVVGNLRQGTVALQEAQDTMQGTSRSLRLIQDRVAEVQQVLRPAEKLVTSMTKQLGDFWTRMEELRHQARQQGAEAVQAQQLAEGASEQALSAQEGFERIKQKYAELKDRLGQSSMLGEQGARIQSVKTEAEELFGETMEMMDRMKDMELELLRGSQAIMLRSADLTGLEKRVEQIRDHINGRVLYYATCK.

The N-terminal stretch at 1-17 (MRPFFLLCFALPGLLHA) is a signal peptide. Residues 22–249 (SRGACYPPVG…AVSQLRLQGS (228 aa)) form the Laminin N-terminal domain. Asparagine 220 carries N-linked (GlcNAc...) asparagine glycosylation. 24 disulfide bridges follow: cysteine 250-cysteine 259, cysteine 252-cysteine 279, cysteine 281-cysteine 290, cysteine 293-cysteine 313, cysteine 316-cysteine 325, cysteine 318-cysteine 343, cysteine 346-cysteine 355, cysteine 358-cysteine 376, cysteine 379-cysteine 392, cysteine 381-cysteine 399, cysteine 401-cysteine 410, cysteine 413-cysteine 428, cysteine 431-cysteine 444, cysteine 433-cysteine 451, cysteine 453-cysteine 462, cysteine 465-cysteine 478, cysteine 481-cysteine 493, cysteine 483-cysteine 500, cysteine 502-cysteine 511, cysteine 519-cysteine 531, cysteine 534-cysteine 546, cysteine 536-cysteine 553, cysteine 555-cysteine 564, and cysteine 567-cysteine 578. Laminin EGF-like domains lie at 250-315 (CFCH…ECQR), 316-378 (CDCN…TCIS), 379-430 (CECD…GCHR), 431-480 (CDCN…GCEP), 481-533 (CACD…GCRA), and 534-580 (CDCD…VCVA). The segment at 579-785 (VACHPCFQTY…SLPDLTPTFN (207 aa)) is domain II. Asparagine 604 carries an N-linked (GlcNAc...) asparagine glycan. The stretch at 723 to 757 (EQSAQAAQQVSDSSRLLDQLRDSRREAERLVRQAG) forms a coiled coil. The domain alpha stretch occupies residues 786-816 (KLCGNSRQMACTPISCPGELCPQDNGTACGS). Asparagine 810 carries an N-linked (GlcNAc...) asparagine glycan. Residues 817 to 1170 (RCRGVLPRAG…INGRVLYYAT (354 aa)) form a domain I region. 2 coiled-coil regions span residues 831-884 (MAGQ…MEED) and 948-1133 (VLSQ…ELEL).

Laminin is a complex glycoprotein, consisting of three different polypeptide chains (alpha, beta, gamma), which are bound to each other by disulfide bonds into a cross-shaped molecule comprising one long and three short arms with globules at each end. Beta-3 is a subunit of laminin-5 (laminin-332 or epiligrin/kalinin/nicein). Interacts with ECM1. As to expression, found in the basement membranes (major component).

The protein localises to the secreted. It is found in the extracellular space. The protein resides in the extracellular matrix. Its subcellular location is the basement membrane. In terms of biological role, binding to cells via a high affinity receptor, laminin is thought to mediate the attachment, migration and organization of cells into tissues during embryonic development by interacting with other extracellular matrix components. The sequence is that of Laminin subunit beta-3 (LAMB3) from Homo sapiens (Human).